We begin with the raw amino-acid sequence, 894 residues long: Cell wall-associated protease (894 aa).

A signal peptide spans 1-31; sequence MKRRKFSSVVAAVLIFALIFSLFSPGTKAAA. Positions 422 to 729 constitute a Peptidase S8 domain; that stretch reads QWPLKNNGEN…YGRLNVMKAV (308 aa). Residues Asp-462, His-497, and Ser-650 each act as charge relay system in the active site.

Belongs to the peptidase S8 family. In terms of processing, proteolytically cleaved to yield CWBP23 and CWBP52.

It localises to the secreted. It is found in the cell wall. With respect to regulation, inhibited by PMSF. Its function is as follows. CWBP52 is a serine-type protease that could be involved in proteoglycan peptide bridges. This chain is Cell wall-associated protease (wprA), found in Bacillus subtilis (strain 168).